The following is an 88-amino-acid chain: Large ribosomal subunit protein bL27 (88 aa).

A disordered region spans residues 1 to 24 (MAHKKGTGSTRNGRDSNSKRLGVK).

Belongs to the bacterial ribosomal protein bL27 family.

The chain is Large ribosomal subunit protein bL27 from Prochlorococcus marinus (strain MIT 9303).